The chain runs to 467 residues: Protection of telomeres protein 1a (467 aa).

This sequence belongs to the telombin family. In terms of assembly, component of the telomerase holoenzyme complex at least composed of TERT, CBF5 and POT1a. The RNA molecule associated to the telomerase complex, and providing a template for telomeric DNA synthesis, is most likely TR and not TER1 as described previously. Interacts with the N-terminal part of TERT. Interacts with CBF5. Interacts with CTC1 and STN1. Does not interact with TEN1. Expressed in roots, rosette leaves, cauline leaves, stems and flowers.

It is found in the nucleus. It localises to the chromosome. The protein localises to the telomere. The protein resides in the nucleolus. Its subcellular location is the cytoplasm. Its function is as follows. Component of the telomerase ribonucleoprotein (RNP) complex that is essential for the positive regulation of telomere length. Binds RNA non-specifically. Binds specifically single-stranded telomeric DNA. Not required to recruit telomerase to telomeres, but stimulates TER1 RNP repeat addition processivity. The sequence is that of Protection of telomeres protein 1a from Arabidopsis thaliana (Mouse-ear cress).